We begin with the raw amino-acid sequence, 239 residues long: Lactate utilization protein A (239 aa).

Belongs to the LutA/YkgE family.

Its function is as follows. Is involved in L-lactate degradation and allows cells to grow with lactate as the sole carbon source. The chain is Lactate utilization protein A from Geobacillus thermodenitrificans (strain NG80-2).